The chain runs to 195 residues: MSKQEKSNVEDKSLDIETAAQVETAQESASGALEELSVEEQLERAKDTIKELEDSCDQFKDEALRAKAEMENIRKRAERDVSNARKFGIEKFAKELLPVIDSIEQALKHEVKLEEAIAMKEGIELTAKMLVDILKKNGVEELHPKGEKFDPNLHEAMAMIPNPEFEDNTIFDVFQKGYMLNGRIVRAAKVVIVKN.

It belongs to the GrpE family. Homodimer.

It localises to the cytoplasm. Functionally, participates actively in the response to hyperosmotic and heat shock by preventing the aggregation of stress-denatured proteins, in association with DnaK and GrpE. It is the nucleotide exchange factor for DnaK and may function as a thermosensor. Unfolded proteins bind initially to DnaJ; upon interaction with the DnaJ-bound protein, DnaK hydrolyzes its bound ATP, resulting in the formation of a stable complex. GrpE releases ADP from DnaK; ATP binding to DnaK triggers the release of the substrate protein, thus completing the reaction cycle. Several rounds of ATP-dependent interactions between DnaJ, DnaK and GrpE are required for fully efficient folding. This chain is Protein GrpE, found in Francisella tularensis subsp. novicida (strain U112).